Consider the following 332-residue polypeptide: Lipoyl synthase (332 aa).

[4Fe-4S] cluster-binding residues include cysteine 74, cysteine 79, cysteine 85, cysteine 100, cysteine 104, cysteine 107, and serine 314. The Radical SAM core domain maps to 85–303 (CFGKGTATFM…EEKAYEMGFS (219 aa)).

Belongs to the radical SAM superfamily. Lipoyl synthase family. [4Fe-4S] cluster serves as cofactor.

Its subcellular location is the cytoplasm. The catalysed reaction is [[Fe-S] cluster scaffold protein carrying a second [4Fe-4S](2+) cluster] + N(6)-octanoyl-L-lysyl-[protein] + 2 oxidized [2Fe-2S]-[ferredoxin] + 2 S-adenosyl-L-methionine + 4 H(+) = [[Fe-S] cluster scaffold protein] + N(6)-[(R)-dihydrolipoyl]-L-lysyl-[protein] + 4 Fe(3+) + 2 hydrogen sulfide + 2 5'-deoxyadenosine + 2 L-methionine + 2 reduced [2Fe-2S]-[ferredoxin]. It functions in the pathway protein modification; protein lipoylation via endogenous pathway; protein N(6)-(lipoyl)lysine from octanoyl-[acyl-carrier-protein]: step 2/2. Functionally, catalyzes the radical-mediated insertion of two sulfur atoms into the C-6 and C-8 positions of the octanoyl moiety bound to the lipoyl domains of lipoate-dependent enzymes, thereby converting the octanoylated domains into lipoylated derivatives. The polypeptide is Lipoyl synthase (Polaromonas naphthalenivorans (strain CJ2)).